The primary structure comprises 363 residues: Ribosomal RNA large subunit methyltransferase M (363 aa).

S-adenosyl-L-methionine is bound by residues S190, 223–226 (CPGG), D242, D262, and D279. Residue K308 is the Proton acceptor of the active site.

This sequence belongs to the class I-like SAM-binding methyltransferase superfamily. RNA methyltransferase RlmE family. RlmM subfamily. As to quaternary structure, monomer.

Its subcellular location is the cytoplasm. It carries out the reaction cytidine(2498) in 23S rRNA + S-adenosyl-L-methionine = 2'-O-methylcytidine(2498) in 23S rRNA + S-adenosyl-L-homocysteine + H(+). Functionally, catalyzes the 2'-O-methylation at nucleotide C2498 in 23S rRNA. This is Ribosomal RNA large subunit methyltransferase M from Vibrio vulnificus (strain CMCP6).